We begin with the raw amino-acid sequence, 215 residues long: uncharacterized protein (215 aa).

Disordered stretches follow at residues 1 to 144 and 156 to 215; these read MPKG…PYLR and IQGH…GAPA. Low complexity-rich tracts occupy residues 16-29, 49-58, 85-96, and 104-127; these read ASTP…ASPT, SSSWPKSPIK, SGSSSPGPSSSR, and STAA…RAAP.

This is an uncharacterized protein from Homo sapiens (Human).